We begin with the raw amino-acid sequence, 480 residues long: Glutamyl-tRNA(Gln) amidotransferase subunit A (480 aa).

Catalysis depends on charge relay system residues Lys74 and Ser149. Ser173 functions as the Acyl-ester intermediate in the catalytic mechanism.

This sequence belongs to the amidase family. GatA subfamily. Heterotrimer of A, B and C subunits.

It catalyses the reaction L-glutamyl-tRNA(Gln) + L-glutamine + ATP + H2O = L-glutaminyl-tRNA(Gln) + L-glutamate + ADP + phosphate + H(+). Functionally, allows the formation of correctly charged Gln-tRNA(Gln) through the transamidation of misacylated Glu-tRNA(Gln) in organisms which lack glutaminyl-tRNA synthetase. The reaction takes place in the presence of glutamine and ATP through an activated gamma-phospho-Glu-tRNA(Gln). The chain is Glutamyl-tRNA(Gln) amidotransferase subunit A from Prochlorococcus marinus (strain MIT 9312).